Reading from the N-terminus, the 224-residue chain is Vesicle transport through interaction with t-SNAREs homolog 1A (224 aa).

Over 1 to 199 (MSADFEGYEQ…GMLRRIIQNR (199 aa)) the chain is Cytoplasmic. 2 coiled-coil regions span residues 31-92 (PDEK…KRSR) and 106-185 (DAGN…GKSS). A helical; Anchor for type IV membrane protein transmembrane segment spans residues 200-220 (ILLVILGIIVVITILTAITFF). The Vesicular segment spans residues 221-224 (VRGH).

This sequence belongs to the VTI1 family. Interacts with distinct SNARE complexes that contain either STX5 or STX6. Interacts with NAPA and, to a lesser extent, with NAPG. Identified in a complex containing STX6, STX12, VAMP4 and VTI1A. As to expression, specifically expressed in the neuronal tissues cerebellum, cortex and hippocampus. Isoform 1/VTI1A is expressed in the same neuronal tissues but also in lung, liver, kidney and spleen.

It localises to the membrane. The protein localises to the cytoplasmic vesicle. The protein resides in the secretory vesicle. Its subcellular location is the synaptic vesicle membrane. It is found in the clathrin-coated vesicle membrane. It localises to the golgi apparatus membrane. In terms of biological role, V-SNARE that mediates vesicle transport pathways through interactions with t-SNAREs on the target membrane. These interactions are proposed to mediate aspects of the specificity of vesicle trafficking and to promote fusion of the lipid bilayers. Involved in vesicular transport from the late endosomes to the trans-Golgi network. Along with VAMP7, involved in an non-conventional RAB1-dependent traffic route to the cell surface used by KCNIP1 and KCND2. May be concerned with increased secretion of cytokines associated with cellular senescence. This chain is Vesicle transport through interaction with t-SNAREs homolog 1A (Vti1a), found in Rattus norvegicus (Rat).